The following is a 417-amino-acid chain: Phosphoglycerate kinase 1 (417 aa).

Position 2 is an N-acetylserine (S2). S2 and S4 each carry phosphoserine. K6 bears the N6-succinyllysine mark. K11 is subject to N6-acetyllysine. (2R)-3-phosphoglycerate contacts are provided by V23, D24, F25, N26, Q38, and R39. The segment at 38-43 (QRIKAA) is mitochondrial targeting region exposed following cis-trans isomerization by PIN1 and recognized by the TOM complex for mitochondrial translocation of the protein. K48 carries the N6-acetyllysine; alternate modification. Position 48 is an N6-succinyllysine; alternate (K48). Residues S62, H63, G65, and R66 each contribute to the (2R)-3-phosphoglycerate site. At K75 the chain carries N6-acetyllysine. Y76 is subject to Phosphotyrosine. An N6-acetyllysine mark is found at K86 and K91. K97 bears the N6-acetyllysine; alternate mark. An N6-(2-hydroxyisobutyryl)lysine; alternate modification is found at K97. L122 and R123 together coordinate (2R)-3-phosphoglycerate. K131 is subject to N6-acetyllysine; alternate. K131 is subject to N6-malonyllysine; alternate. Position 146 is an N6-acetyllysine (K146). H170 and R171 together coordinate (2R)-3-phosphoglycerate. K191 carries the N6-succinyllysine modification. Residue Y196 is modified to Phosphotyrosine. K199 carries the N6-acetyllysine modification. Residue S203 is modified to Phosphoserine; by MAPK1. G214 is a binding site for ADP. G214 contacts CDP. 2 residues coordinate AMP: A215 and K216. A215 contacts ATP. Residue A215 coordinates Mg(2+). The residue at position 216 (K216) is an N6-(2-hydroxyisobutyryl)lysine. Positions 218 and 219 each coordinate Mg(2+). Residue D219 coordinates CDP. Residue K220 participates in AMP binding. K220 is an ATP binding site. The residue at position 220 (K220) is an N6-(2-hydroxyisobutyryl)lysine. G238 serves as a coordination point for ADP. G238 is a CDP binding site. AMP is bound at residue G239. G239 lines the ATP pocket. An N6-acetyllysine mark is found at K267 and K291. G313 serves as a coordination point for AMP. G313 is an ATP binding site. An N6-(2-hydroxyisobutyryl)lysine modification is found at K323. Residues G338, V340, and F343 each coordinate CDP. F343 contributes to the ADP binding site. E344 lines the AMP pocket. Position 344 (E344) interacts with ATP. The residue at position 361 (K361) is an N6-acetyllysine. Residues D375 and T376 each contribute to the ATP site. Position 375 (D375) interacts with Mg(2+).

The protein belongs to the phosphoglycerate kinase family. In terms of assembly, monomer. Interacts with kinase MAPK1/ERK2; the interaction is direct, occurs under hypoxic conditions, and promotes its interaction with PIN1. Interacts with peptidyl-prolyl cis-trans isomerase PIN1; the interaction is direct, occurs under hypoxic conditions, and targets the protein to the mitochondrion by promoting interactions with the TOM complex. Interacts with mitochondrial circRNA mcPGK1 (via its 2nd stem-loop); the interaction is direct and targets the protein to the mitochondrion by promoting interactions with the TOM complex. Interacts with pyruvate dehydrogenase kinase PDK1; the interaction is direct, occurs under hypoxic conditions and leads to PDK1-mediated inhibition of pyruvate dehydrogenase complex activity. Mg(2+) serves as cofactor. Phosphorylated at Ser-203 by MAPK1/ERK2 under hypoxic conditions, which promotes its mitochondrial targeting. In terms of tissue distribution, mainly expressed in spermatogonia. Localized on the principle piece in the sperm (at protein level). Expression significantly decreased in the testis of elderly men.

It localises to the cytoplasm. The protein localises to the cytosol. The protein resides in the mitochondrion matrix. The catalysed reaction is (2R)-3-phosphoglycerate + ATP = (2R)-3-phospho-glyceroyl phosphate + ADP. It carries out the reaction L-seryl-[protein] + ATP = O-phospho-L-seryl-[protein] + ADP + H(+). Its pathway is carbohydrate degradation; glycolysis; pyruvate from D-glyceraldehyde 3-phosphate: step 2/5. Specifically inhibited by heterocyclic compound CBR-470-0. Functionally, catalyzes one of the two ATP producing reactions in the glycolytic pathway via the reversible conversion of 1,3-diphosphoglycerate to 3-phosphoglycerate. Both L- and D- forms of purine and pyrimidine nucleotides can be used as substrates, but the activity is much lower on pyrimidines. In addition to its role as a glycolytic enzyme, it seems that PGK1 acts as a polymerase alpha cofactor protein (primer recognition protein). Acts as a protein kinase when localized to the mitochondrion where it phosphorylates pyruvate dehydrogenase kinase PDK1 to inhibit pyruvate dehydrogenase complex activity and suppress the formation of acetyl-coenzyme A from pyruvate, and consequently inhibit oxidative phosphorylation and promote glycolysis. May play a role in sperm motility. This is Phosphoglycerate kinase 1 (PGK1) from Homo sapiens (Human).